Here is a 76-residue protein sequence, read N- to C-terminus: Vasotab-TY1 (76 aa).

The first 21 residues, 1–21 (MKFTLFSVLVVLLIATFVAAD), serve as a signal peptide directing secretion. The Kazal-like domain maps to 22–76 (DCPRICTADFRPVCGTPSGGRRSANRTFGNQCSLDSHNCLNKGDTYDKLHDGECK). 3 disulfide bridges follow: cysteine 23-cysteine 60, cysteine 27-cysteine 53, and cysteine 35-cysteine 75.

As to expression, expressed by the salivary gland.

Its subcellular location is the secreted. Vasodilator protein that inhibits vasoconstriction of isolated rat femoral artery induced by phenylephrine. Since platelet aggregation and vasoconstriction are key hemostatic responses, particularly in small wounds, this protein likely participates in the antihemostatic responses during blood feeding. Blocks L-type calcium channels (Cav1/CACNA1) in left ventricular myocytes isolated from rat hearts. In Tabanus yao (Horsefly), this protein is Vasotab-TY1.